A 367-amino-acid chain; its full sequence is Alanine racemase (367 aa).

Residue Lys-35 is the Proton acceptor; specific for D-alanine of the active site. Lys-35 carries the N6-(pyridoxal phosphate)lysine modification. Residue Arg-130 participates in substrate binding. Tyr-256 (proton acceptor; specific for L-alanine) is an active-site residue. Residue Met-304 participates in substrate binding.

This sequence belongs to the alanine racemase family. Pyridoxal 5'-phosphate is required as a cofactor.

The enzyme catalyses L-alanine = D-alanine. The protein operates within amino-acid biosynthesis; D-alanine biosynthesis; D-alanine from L-alanine: step 1/1. Catalyzes the interconversion of L-alanine and D-alanine. May also act on other amino acids. In Methylibium petroleiphilum (strain ATCC BAA-1232 / LMG 22953 / PM1), this protein is Alanine racemase (alr).